The following is a 575-amino-acid chain: Aspartate--tRNA ligase (575 aa).

Residue glutamate 169 participates in L-aspartate binding. An aspartate region spans residues 193-196 (QLFK). Arginine 215 lines the L-aspartate pocket. Residues 215-217 (RDE) and glutamine 224 contribute to the ATP site. Position 438 (histidine 438) interacts with L-aspartate. Glutamate 472 lines the ATP pocket. Arginine 479 serves as a coordination point for L-aspartate. 524–527 (GLDR) is a binding site for ATP.

The protein belongs to the class-II aminoacyl-tRNA synthetase family. Type 1 subfamily. As to quaternary structure, homodimer.

It is found in the cytoplasm. The enzyme catalyses tRNA(Asp) + L-aspartate + ATP = L-aspartyl-tRNA(Asp) + AMP + diphosphate. Functionally, catalyzes the attachment of L-aspartate to tRNA(Asp) in a two-step reaction: L-aspartate is first activated by ATP to form Asp-AMP and then transferred to the acceptor end of tRNA(Asp). This is Aspartate--tRNA ligase from Mycoplasma capricolum subsp. capricolum (strain California kid / ATCC 27343 / NCTC 10154).